The primary structure comprises 304 residues: Sulfate adenylyltransferase subunit 2 (304 aa).

Belongs to the PAPS reductase family. CysD subfamily. Heterodimer composed of CysD, the smaller subunit, and CysNC.

The enzyme catalyses sulfate + ATP + H(+) = adenosine 5'-phosphosulfate + diphosphate. It participates in sulfur metabolism; hydrogen sulfide biosynthesis; sulfite from sulfate: step 1/3. In terms of biological role, with CysN forms the ATP sulfurylase (ATPS) that catalyzes the adenylation of sulfate producing adenosine 5'-phosphosulfate (APS) and diphosphate, the first enzymatic step in sulfur assimilation pathway. APS synthesis involves the formation of a high-energy phosphoric-sulfuric acid anhydride bond driven by GTP hydrolysis by CysN coupled to ATP hydrolysis by CysD. This Xylella fastidiosa (strain 9a5c) protein is Sulfate adenylyltransferase subunit 2.